A 190-amino-acid chain; its full sequence is Syndecan-2-B (190 aa).

A signal peptide spans 1-22 (MRNVWLIVPFALLAAFSGETWA). The Extracellular segment spans residues 23–136 (QADRDLYIDS…NLFHRTEVLA (114 aa)). The interval 34–60 (ESSGNYPVDDDDYSSGSGSGIPAHDDD) is disordered. Residues Ser-36, Ser-48, Ser-50, and Ser-52 are each glycosylated (O-linked (Xyl...) (glycosaminoglycan) serine). A helical transmembrane segment spans residues 137–157 (AVIAGGGIGFLFAVFLILLLV). Topologically, residues 158-190 (YRMRKKDEGSYDLGERKPSSAVYQKAPTKEFYA) are cytoplasmic. Residues 167–190 (SYDLGERKPSSAVYQKAPTKEFYA) form a disordered region.

This sequence belongs to the syndecan proteoglycan family. In terms of processing, O-glycosylated; contains both heparan sulfate and chondroitin sulfate.

It is found in the membrane. In terms of biological role, cell surface proteoglycan. The sequence is that of Syndecan-2-B (sdc2-b) from Xenopus laevis (African clawed frog).